The following is a 102-amino-acid chain: UPF0058 protein MTH_224 (102 aa).

The protein belongs to the UPF0058 family.

This is UPF0058 protein MTH_224 from Methanothermobacter thermautotrophicus (strain ATCC 29096 / DSM 1053 / JCM 10044 / NBRC 100330 / Delta H) (Methanobacterium thermoautotrophicum).